A 311-amino-acid polypeptide reads, in one-letter code: MSNSIVIQTSSTVIEDMKQQYKHSLSPKTPQGGIFMAKVPSCTITAYKSGKVMFQGGRAEAEAARWQTVSQTPKTAVKKSVDSHRYAPPASIGTMSIVGSDEVGTGDFFGPMTVVAVYVDAKQIPLLKELGVKDSKNLNDEQITAIAKQLLHVVPYSSLVLHNEKYNELFDKGNNQGKLKALLHNKAITNLLAKIAPTKPEGVLIDQFTQPDTYYKYLAKQKQVQRENVYFATKGESVHLAVAAASILARYSFVKQFDELSKKAGMPLPKGAGKQVDIAAAKLIQKLGKERLPEFVKLHFANTEKAFRLLK.

An RNase H type-2 domain is found at 95 to 311 (MSIVGSDEVG…NTEKAFRLLK (217 aa)). Residues Asp101, Glu102, and Asp206 each coordinate a divalent metal cation.

Belongs to the RNase HII family. RnhC subfamily. Requires Mn(2+) as cofactor. It depends on Mg(2+) as a cofactor.

The protein localises to the cytoplasm. The catalysed reaction is Endonucleolytic cleavage to 5'-phosphomonoester.. Endonuclease that specifically degrades the RNA of RNA-DNA hybrids. The protein is Ribonuclease HIII of Bacillus cereus (strain ATCC 10987 / NRS 248).